A 108-amino-acid chain; its full sequence is Protein YcgL (108 aa).

Positions 12-96 (MFCVIYRSSK…SPEDLLKQHL (85 aa)) constitute a YcgL domain.

The sequence is that of Protein YcgL from Shigella dysenteriae serotype 1 (strain Sd197).